We begin with the raw amino-acid sequence, 115 residues long: U3-lycotoxin-Ls1a (115 aa).

The signal sequence occupies residues 1 to 20; the sequence is MKFVLLFGVLLVTLFSYSSA. Residues 21–44 constitute a propeptide that is removed on maturation; the sequence is EMLDDFDQAVEDELLSLIEKEEAR. Disulfide bonds link Cys48–Cys63, Cys55–Cys72, Cys62–Cys87, and Cys74–Cys85.

It belongs to the neurotoxin 19 (CSTX) family. 01 subfamily. In terms of tissue distribution, expressed by the venom gland.

It is found in the secreted. This chain is U3-lycotoxin-Ls1a, found in Lycosa singoriensis (Wolf spider).